We begin with the raw amino-acid sequence, 276 residues long: 5-deoxy-glucuronate isomerase (276 aa).

The protein belongs to the isomerase IolB family.

It carries out the reaction 5-deoxy-D-glucuronate = 5-dehydro-2-deoxy-D-gluconate. It functions in the pathway polyol metabolism; myo-inositol degradation into acetyl-CoA; acetyl-CoA from myo-inositol: step 4/7. In terms of biological role, involved in the isomerization of 5-deoxy-glucuronate (5DG) to 5-dehydro-2-deoxy-D-gluconate (DKG or 2-deoxy-5-keto-D-gluconate). This chain is 5-deoxy-glucuronate isomerase, found in Geobacillus kaustophilus (strain HTA426).